A 466-amino-acid polypeptide reads, in one-letter code: Purple acid phosphatase 6 (466 aa).

A signal peptide spans 1–20 (MKNLVIFAFLFLSITTVING). N-linked (GlcNAc...) asparagine glycosylation is present at N88. A Fe cation-binding site is contributed by D164. The N-linked (GlcNAc...) asparagine glycan is linked to N172. Fe cation contacts are provided by D192 and Y195. D192 contacts Zn(2+). Zn(2+)-binding residues include N229 and H314. Residue N229 participates in substrate binding. The Proton donor role is filled by H324. H351 lines the Zn(2+) pocket. Residue 351 to 353 (HVH) coordinates substrate. H353 provides a ligand contact to Fe cation. N-linked (GlcNAc...) asparagine glycans are attached at residues N367 and N424.

The protein belongs to the metallophosphoesterase superfamily. Purple acid phosphatase family. Homodimer. Fe cation is required as a cofactor. Zn(2+) serves as cofactor. Specifically expressed in flowers.

Its subcellular location is the secreted. It carries out the reaction a phosphate monoester + H2O = an alcohol + phosphate. The protein is Purple acid phosphatase 6 (PAP6) of Arabidopsis thaliana (Mouse-ear cress).